Reading from the N-terminus, the 156-residue chain is Transcription antitermination protein NusB (156 aa).

The protein belongs to the NusB family.

Its function is as follows. Involved in transcription antitermination. Required for transcription of ribosomal RNA (rRNA) genes. Binds specifically to the boxA antiterminator sequence of the ribosomal RNA (rrn) operons. The protein is Transcription antitermination protein NusB of Xanthomonas oryzae pv. oryzae (strain MAFF 311018).